The chain runs to 207 residues: ATP synthase subunit b (207 aa).

An N-terminal signal peptide occupies residues 1-27 (MKLRATFVFKTTLVALSFALFALFLVS). The N-palmitoyl cysteine moiety is linked to residue cysteine 28. A lipid anchor (S-diacylglycerol cysteine) is attached at cysteine 28. The chain crosses the membrane as a helical span at residues 49 to 69 (WVFLAHLLAFVILLFLLLFLF).

The protein belongs to the ATPase B chain family. F-type ATPases have 2 components, F(1) - the catalytic core - and F(0) - the membrane proton channel. F(1) has five subunits: alpha(3), beta(3), gamma(1), delta(1), epsilon(1). F(0) has three main subunits: a(1), b(2) and c(10-14). The alpha and beta chains form an alternating ring which encloses part of the gamma chain. F(1) is attached to F(0) by a central stalk formed by the gamma and epsilon chains, while a peripheral stalk is formed by the delta and b chains.

Its subcellular location is the cell membrane. Its function is as follows. F(1)F(0) ATP synthase produces ATP from ADP in the presence of a proton or sodium gradient. F-type ATPases consist of two structural domains, F(1) containing the extramembraneous catalytic core and F(0) containing the membrane proton channel, linked together by a central stalk and a peripheral stalk. During catalysis, ATP synthesis in the catalytic domain of F(1) is coupled via a rotary mechanism of the central stalk subunits to proton translocation. Functionally, component of the F(0) channel, it forms part of the peripheral stalk, linking F(1) to F(0). This chain is ATP synthase subunit b, found in Mycoplasma pneumoniae (strain ATCC 29342 / M129 / Subtype 1) (Mycoplasmoides pneumoniae).